Here is a 192-residue protein sequence, read N- to C-terminus: Peptidyl-tRNA hydrolase (192 aa).

Residue Y14 coordinates tRNA. H19 (proton acceptor) is an active-site residue. TRNA-binding residues include Y64, N66, and N112.

This sequence belongs to the PTH family. In terms of assembly, monomer.

It is found in the cytoplasm. The enzyme catalyses an N-acyl-L-alpha-aminoacyl-tRNA + H2O = an N-acyl-L-amino acid + a tRNA + H(+). Functionally, hydrolyzes ribosome-free peptidyl-tRNAs (with 1 or more amino acids incorporated), which drop off the ribosome during protein synthesis, or as a result of ribosome stalling. In terms of biological role, catalyzes the release of premature peptidyl moieties from peptidyl-tRNA molecules trapped in stalled 50S ribosomal subunits, and thus maintains levels of free tRNAs and 50S ribosomes. The protein is Peptidyl-tRNA hydrolase of Anaeromyxobacter dehalogenans (strain 2CP-1 / ATCC BAA-258).